Here is a 406-residue protein sequence, read N- to C-terminus: Tryptophan synthase beta chain (406 aa).

An N6-(pyridoxal phosphate)lysine modification is found at K99.

Belongs to the TrpB family. Tetramer of two alpha and two beta chains. Requires pyridoxal 5'-phosphate as cofactor.

It carries out the reaction (1S,2R)-1-C-(indol-3-yl)glycerol 3-phosphate + L-serine = D-glyceraldehyde 3-phosphate + L-tryptophan + H2O. It functions in the pathway amino-acid biosynthesis; L-tryptophan biosynthesis; L-tryptophan from chorismate: step 5/5. Functionally, the beta subunit is responsible for the synthesis of L-tryptophan from indole and L-serine. In Chelativorans sp. (strain BNC1), this protein is Tryptophan synthase beta chain.